The primary structure comprises 449 residues: Ribulose bisphosphate carboxylase large chain (449 aa).

The propeptide occupies 1-2 (MS). P3 carries the post-translational modification N-acetylproline. K14 is modified (N6,N6,N6-trimethyllysine). The substrate site is built by N123 and T173. The Proton acceptor role is filled by K175. Position 177 (K177) interacts with substrate. The Mg(2+) site is built by K201, D203, and E204. K201 bears the N6-carboxylysine mark. The active-site Proton acceptor is the H294. 3 residues coordinate substrate: R295, H327, and S379.

The protein belongs to the RuBisCO large chain family. Type I subfamily. In terms of assembly, heterohexadecamer of 8 large chains and 8 small chains; disulfide-linked. The disulfide link is formed within the large subunit homodimers. Mg(2+) is required as a cofactor. Post-translationally, the disulfide bond which can form in the large chain dimeric partners within the hexadecamer appears to be associated with oxidative stress and protein turnover.

Its subcellular location is the plastid. The protein localises to the chloroplast. It carries out the reaction 2 (2R)-3-phosphoglycerate + 2 H(+) = D-ribulose 1,5-bisphosphate + CO2 + H2O. It catalyses the reaction D-ribulose 1,5-bisphosphate + O2 = 2-phosphoglycolate + (2R)-3-phosphoglycerate + 2 H(+). RuBisCO catalyzes two reactions: the carboxylation of D-ribulose 1,5-bisphosphate, the primary event in carbon dioxide fixation, as well as the oxidative fragmentation of the pentose substrate in the photorespiration process. Both reactions occur simultaneously and in competition at the same active site. The polypeptide is Ribulose bisphosphate carboxylase large chain (Hippocratea richardiana).